The following is a 511-amino-acid chain: Rab proteins geranylgeranyltransferase component A (511 aa).

The protein belongs to the Rab GDI family.

The protein localises to the cytoplasm. Its subcellular location is the perinuclear region. It localises to the cytoskeleton. It is found in the spindle pole. Its function is as follows. Binds unprenylated Rab proteins, presents it to the catalytic component B, and remains bound to it after the geranylgeranyl transfer reaction. The component A is thought to be regenerated by transferring its prenylated Rab to a protein acceptor. The protein is Rab proteins geranylgeranyltransferase component A of Drosophila melanogaster (Fruit fly).